Consider the following 1242-residue polypeptide: ATP-dependent helicase/nuclease subunit A (1242 aa).

A UvrD-like helicase ATP-binding domain is found at 12–487 (SRWTDEQWKA…IDLASNFRSR (476 aa)). 33–40 (AAAGSGKT) contacts ATP. One can recognise a UvrD-like helicase C-terminal domain in the interval 514 to 808 (AAQLKYGADY…RIMTIHSSKG (295 aa)).

The protein belongs to the helicase family. AddA subfamily. In terms of assembly, heterodimer of AddA and AddB/RexB. Requires Mg(2+) as cofactor.

It carries out the reaction Couples ATP hydrolysis with the unwinding of duplex DNA by translocating in the 3'-5' direction.. It catalyses the reaction ATP + H2O = ADP + phosphate + H(+). In terms of biological role, the heterodimer acts as both an ATP-dependent DNA helicase and an ATP-dependent, dual-direction single-stranded exonuclease. Recognizes the chi site generating a DNA molecule suitable for the initiation of homologous recombination. The AddA nuclease domain is required for chi fragment generation; this subunit has the helicase and 3' -&gt; 5' nuclease activities. This is ATP-dependent helicase/nuclease subunit A from Geobacillus kaustophilus (strain HTA426).